The primary structure comprises 92 residues: Exodeoxyribonuclease 7 small subunit (92 aa).

The disordered stretch occupies residues 1-22; it reads MPKKNAISESTNSTPETAPAMT. Residues 7 to 16 are compositionally biased toward polar residues; the sequence is ISESTNSTPE.

It belongs to the XseB family. As to quaternary structure, heterooligomer composed of large and small subunits.

The protein localises to the cytoplasm. The enzyme catalyses Exonucleolytic cleavage in either 5'- to 3'- or 3'- to 5'-direction to yield nucleoside 5'-phosphates.. Its function is as follows. Bidirectionally degrades single-stranded DNA into large acid-insoluble oligonucleotides, which are then degraded further into small acid-soluble oligonucleotides. The polypeptide is Exodeoxyribonuclease 7 small subunit (Photorhabdus laumondii subsp. laumondii (strain DSM 15139 / CIP 105565 / TT01) (Photorhabdus luminescens subsp. laumondii)).